Here is a 329-residue protein sequence, read N- to C-terminus: MNETAADRVAPRGFTELPDLAVRSLGGAVIWADDEFFAEKENLIVPEAPEFRPATYGHRGQVYDGWETRRHRGLPGDDAAVVRLGVPGVIHGVVVDTSWFTGNYPPAISLSALAIDGYPPAADIAARTDWVPLLDRVPVRGDARNPFPIPSRDRWTHVRLTMHPDGGIARLRVHGEGRPDPALLGLGPVDLAALENGALVLDCSDRFYGSPHQLLHPGNARRMGDGWETARRRDDGNDWVRIRLAGPGLIRLAELDTSYFLGNSPAAARLTGRTTDGTEVELLPRTPLQPDTRHRFPTAAVAASVEEVRLDIYPDGGLARVRLFGELGG.

Belongs to the allantoicase family.

It carries out the reaction allantoate + H2O = (S)-ureidoglycolate + urea. The protein operates within nitrogen metabolism; (S)-allantoin degradation; (S)-ureidoglycolate from allantoate (aminidohydrolase route): step 1/1. In Nocardia farcinica (strain IFM 10152), this protein is Probable allantoicase.